The primary structure comprises 72 residues: uncharacterized protein (72 aa).

The helical transmembrane segment at 46–66 threads the bilayer; that stretch reads AIFVFNLCFIPNLCVACIFNV.

The protein localises to the membrane. This is an uncharacterized protein from Saccharomyces cerevisiae (strain ATCC 204508 / S288c) (Baker's yeast).